The sequence spans 149 residues: 3-dehydroquinate dehydratase (149 aa).

The active-site Proton acceptor is tyrosine 22. Residues asparagine 73, histidine 79, and aspartate 86 each coordinate substrate. Histidine 99 acts as the Proton donor in catalysis. Residues leucine 100–serine 101 and arginine 110 each bind substrate.

This sequence belongs to the type-II 3-dehydroquinase family. As to quaternary structure, homododecamer.

It catalyses the reaction 3-dehydroquinate = 3-dehydroshikimate + H2O. Its pathway is metabolic intermediate biosynthesis; chorismate biosynthesis; chorismate from D-erythrose 4-phosphate and phosphoenolpyruvate: step 3/7. In terms of biological role, catalyzes a trans-dehydration via an enolate intermediate. The sequence is that of 3-dehydroquinate dehydratase from Prochlorococcus marinus (strain MIT 9313).